We begin with the raw amino-acid sequence, 181 residues long: Cytochrome b6-f complex iron-sulfur subunit (181 aa).

A disordered region spans residues 1 to 35 (MAQTGNFKSPARMSSLGQGAAPASAGAVTGGKPRE). 2 helical membrane passes run 53 to 73 (VGGVGAVVAVSTLYPVVRYIV) and 114 to 134 (GGSLTAVSAICTHLGCLVHWD). One can recognise a Rieske domain in the interval 85–178 (LAVGPASDVP…VKIEDGKIVV (94 aa)). The [2Fe-2S] cluster site is built by Cys124, His126, Cys142, and His145. Cys129 and Cys144 are oxidised to a cystine.

It belongs to the Rieske iron-sulfur protein family. [2Fe-2S] cluster serves as cofactor.

It localises to the cell inner membrane. It catalyses the reaction 2 oxidized [plastocyanin] + a plastoquinol + 2 H(+)(in) = 2 reduced [plastocyanin] + a plastoquinone + 4 H(+)(out). Component of the green S-bacteria bc-complex which consists of the Rieske protein and cytochrome b subunit and which appears to lack a cytochrome c1-equivalent. This complex has a comparatively low redox potential. The chain is Cytochrome b6-f complex iron-sulfur subunit (petC) from Chlorobaculum tepidum (strain ATCC 49652 / DSM 12025 / NBRC 103806 / TLS) (Chlorobium tepidum).